The chain runs to 505 residues: Glutamyl-tRNA(Gln) amidotransferase subunit A (505 aa).

Active-site charge relay system residues include K80 and S155. S179 acts as the Acyl-ester intermediate in catalysis.

It belongs to the amidase family. GatA subfamily. As to quaternary structure, heterotrimer of A, B and C subunits.

The enzyme catalyses L-glutamyl-tRNA(Gln) + L-glutamine + ATP + H2O = L-glutaminyl-tRNA(Gln) + L-glutamate + ADP + phosphate + H(+). Allows the formation of correctly charged Gln-tRNA(Gln) through the transamidation of misacylated Glu-tRNA(Gln) in organisms which lack glutaminyl-tRNA synthetase. The reaction takes place in the presence of glutamine and ATP through an activated gamma-phospho-Glu-tRNA(Gln). This is Glutamyl-tRNA(Gln) amidotransferase subunit A from Acidothermus cellulolyticus (strain ATCC 43068 / DSM 8971 / 11B).